We begin with the raw amino-acid sequence, 319 residues long: tRNA uridine(34) hydroxylase (319 aa).

The Rhodanese domain occupies 133 to 231 (EDPDSVVIDT…YLEDVSSENS (99 aa)). Cys191 functions as the Cysteine persulfide intermediate in the catalytic mechanism.

It belongs to the TrhO family.

The enzyme catalyses uridine(34) in tRNA + AH2 + O2 = 5-hydroxyuridine(34) in tRNA + A + H2O. In terms of biological role, catalyzes oxygen-dependent 5-hydroxyuridine (ho5U) modification at position 34 in tRNAs. In Prochlorococcus marinus (strain NATL1A), this protein is tRNA uridine(34) hydroxylase.